The chain runs to 109 residues: MKVLVIIALCLVAFQSALSKKIENFESYIEDLKSEARECIPLYNDCTAFKYNNNCCKDPEKKYQYKCSCIVCKEGKEQCTCQRKETVESMMKCVRFVKKVGEKVIEKVG.

An N-terminal signal peptide occupies residues 1 to 19 (MKVLVIIALCLVAFQSALS). The propeptide at 20–37 (KKIENFESYIEDLKSEAR) is removed in mature form. The Processing quadruplet motif motif lies at 34–37 (SEAR). Intrachain disulfides connect Cys-39–Cys-56, Cys-46–Cys-67, Cys-55–Cys-81, Cys-69–Cys-79, and Cys-72–Cys-93. Val-108 carries the post-translational modification Valine amide.

Belongs to the neurotoxin 19 (CSTX) family. 11 (latartoxin) subfamily. Post-translationally, contains 5 disulfide bonds. Cleavage of the propeptide depends on the processing quadruplet motif (XXXR, with at least one of X being E). Expressed by the venom gland.

Its subcellular location is the secreted. Its function is as follows. Insect toxin. Causes paralysis in larvae of C.vicina by depolarizing membranes at the neuromuscular junction. In Lachesana tarabaevi (Spider), this protein is Latartoxin-2a.